Here is a 172-residue protein sequence, read N- to C-terminus: Large ribosomal subunit protein uL10 (172 aa).

This sequence belongs to the universal ribosomal protein uL10 family. Part of the ribosomal stalk of the 50S ribosomal subunit. The N-terminus interacts with L11 and the large rRNA to form the base of the stalk. The C-terminus forms an elongated spine to which L12 dimers bind in a sequential fashion forming a multimeric L10(L12)X complex.

Its function is as follows. Forms part of the ribosomal stalk, playing a central role in the interaction of the ribosome with GTP-bound translation factors. The sequence is that of Large ribosomal subunit protein uL10 from Rhizobium etli (strain ATCC 51251 / DSM 11541 / JCM 21823 / NBRC 15573 / CFN 42).